The sequence spans 64 residues: Large ribosomal subunit protein uL29 (64 aa).

Belongs to the universal ribosomal protein uL29 family.

The polypeptide is Large ribosomal subunit protein uL29 (Coprothermobacter proteolyticus (strain ATCC 35245 / DSM 5265 / OCM 4 / BT)).